Consider the following 234-residue polypeptide: tRNA1(Val) (adenine(37)-N6)-methyltransferase (234 aa).

This sequence belongs to the methyltransferase superfamily. tRNA (adenine-N(6)-)-methyltransferase family.

The protein resides in the cytoplasm. It catalyses the reaction adenosine(37) in tRNA1(Val) + S-adenosyl-L-methionine = N(6)-methyladenosine(37) in tRNA1(Val) + S-adenosyl-L-homocysteine + H(+). Its function is as follows. Specifically methylates the adenine in position 37 of tRNA(1)(Val) (anticodon cmo5UAC). This chain is tRNA1(Val) (adenine(37)-N6)-methyltransferase, found in Aliivibrio fischeri (strain MJ11) (Vibrio fischeri).